We begin with the raw amino-acid sequence, 466 residues long: uncharacterized protein (466 aa).

The C2 NT-type domain maps to 4–199 (NHNSKAKRPK…IINVSLQLKL (196 aa)). 3 disordered regions span residues 262 to 298 (AKPG…STTI), 374 to 393 (LGNK…YSTM), and 400 to 452 (EKKQ…LTDR). Positions 266 to 298 (TNATGNSTSIKSPTSTNHKSSEMTTKPGLSTTI) are enriched in polar residues. 2 positions are modified to phosphoserine: Ser433 and Ser439.

It to S.pombe SpCC1494.08c.

This is an uncharacterized protein from Saccharomyces cerevisiae (strain ATCC 204508 / S288c) (Baker's yeast).